The sequence spans 673 residues: DNA ligase (673 aa).

NAD(+) is bound by residues 34–38 (DAEYD), 83–84 (SL), and Glu116. Residue Lys118 is the N6-AMP-lysine intermediate of the active site. Positions 139, 176, 293, and 317 each coordinate NAD(+). Zn(2+)-binding residues include Cys411, Cys414, Cys429, and Cys435. The 79-residue stretch at 595 to 673 (NQQNPFFGKT…EDEFLKWVNS (79 aa)) folds into the BRCT domain.

It belongs to the NAD-dependent DNA ligase family. LigA subfamily. The cofactor is Mg(2+). Requires Mn(2+) as cofactor.

It carries out the reaction NAD(+) + (deoxyribonucleotide)n-3'-hydroxyl + 5'-phospho-(deoxyribonucleotide)m = (deoxyribonucleotide)n+m + AMP + beta-nicotinamide D-nucleotide.. In terms of biological role, DNA ligase that catalyzes the formation of phosphodiester linkages between 5'-phosphoryl and 3'-hydroxyl groups in double-stranded DNA using NAD as a coenzyme and as the energy source for the reaction. It is essential for DNA replication and repair of damaged DNA. The polypeptide is DNA ligase (Legionella pneumophila (strain Paris)).